A 452-amino-acid polypeptide reads, in one-letter code: Sensor histidine kinase HprS (452 aa).

Residues Met-1–Arg-9 lie on the Cytoplasmic side of the membrane. Residues Leu-10–Tyr-30 form a helical membrane-spanning segment. Residues Asn-31–Lys-158 lie on the Periplasmic side of the membrane. Residues Ile-159–Leu-179 form a helical membrane-spanning segment. At Ile-180–Asn-452 the chain is on the cytoplasmic side. Residues Arg-181–Glu-234 form the HAMP domain. The 211-residue stretch at Asp-242–Asn-452 folds into the Histidine kinase domain. The residue at position 245 (His-245) is a Phosphohistidine; by autocatalysis.

Post-translationally, autophosphorylated.

The protein resides in the cell inner membrane. It carries out the reaction ATP + protein L-histidine = ADP + protein N-phospho-L-histidine.. Functionally, member of a two-component regulatory system HprR/HprS involved in response to hydrogen peroxide. Senses H(2)O(2), maybe via the redox state of the membrane. Activates HprR by phosphorylation. Can also phosphorylate CusR. This chain is Sensor histidine kinase HprS, found in Escherichia coli (strain K12).